The primary structure comprises 305 residues: Dihydroorotate dehydrogenase B (NAD(+)), catalytic subunit (305 aa).

FMN contacts are provided by residues Ser-20 and 44–45 (KG). Residues Lys-44 and 68–72 (NAIGI) contribute to the substrate site. FMN-binding residues include Asn-98 and Asn-126. Asn-126 is a substrate binding site. Catalysis depends on Cys-129, which acts as the Nucleophile. FMN contacts are provided by Lys-165 and Ile-191. Substrate is bound at residue 192–193 (NT). FMN-binding positions include Gly-217, 243–244 (GG), and 265–266 (GT).

This sequence belongs to the dihydroorotate dehydrogenase family. Type 1 subfamily. Heterotetramer of 2 PyrK and 2 PyrD type B subunits. It depends on FMN as a cofactor.

It is found in the cytoplasm. It catalyses the reaction (S)-dihydroorotate + NAD(+) = orotate + NADH + H(+). The protein operates within pyrimidine metabolism; UMP biosynthesis via de novo pathway; orotate from (S)-dihydroorotate (NAD(+) route): step 1/1. Its function is as follows. Catalyzes the conversion of dihydroorotate to orotate with NAD(+) as electron acceptor. The chain is Dihydroorotate dehydrogenase B (NAD(+)), catalytic subunit (pyrD) from Maridesulfovibrio salexigens (strain ATCC 14822 / DSM 2638 / NCIMB 8403 / VKM B-1763) (Desulfovibrio salexigens).